The sequence spans 213 residues: Motile sperm domain-containing protein 1 (213 aa).

Positions 16–143 (PVFVFPTELI…KEHLTESLFF (128 aa)) constitute an MSP domain. 2 helical membrane passes run 159-179 (SLLTVFLGVVCIAALMLPTLG) and 191-211 (LSVNQKLVAAYILGLITMAIL). The short motif at 205–208 (LITM) is the Nuclear export signal element.

It localises to the endoplasmic reticulum membrane. The protein localises to the golgi apparatus membrane. Plays a role in differentiation and/or proliferation of mesenchymal stem cells. Proposed to be involved in epithelial-to-mesenchymal transition (EMT). However, another study suggests that it is not required for EMT or stem cell self-renewal and acts during later stages of differentiation. In Pongo abelii (Sumatran orangutan), this protein is Motile sperm domain-containing protein 1 (MOSPD1).